Here is a 124-residue protein sequence, read N- to C-terminus: uncharacterized protein (124 aa).

A signal peptide spans 1-23 (MHKLLKLLSITLIGLSVATGVQA).

Belongs to the cytochrome b562 family.

This is an uncharacterized protein from Pasteurella multocida (strain Pm70).